Consider the following 278-residue polypeptide: Orotidine 5'-phosphate decarboxylase (278 aa).

The active-site Proton donor is K96.

Belongs to the OMP decarboxylase family. Type 2 subfamily.

It catalyses the reaction orotidine 5'-phosphate + H(+) = UMP + CO2. The protein operates within pyrimidine metabolism; UMP biosynthesis via de novo pathway; UMP from orotate: step 2/2. This chain is Orotidine 5'-phosphate decarboxylase, found in Salinispora arenicola (strain CNS-205).